Reading from the N-terminus, the 278-residue chain is Formamidopyrimidine-DNA glycosylase (278 aa).

P2 acts as the Schiff-base intermediate with DNA in catalysis. Catalysis depends on E3, which acts as the Proton donor. K60 (proton donor; for beta-elimination activity) is an active-site residue. DNA contacts are provided by H95 and R114. The FPG-type zinc finger occupies 244–278; the sequence is WVYRRGGEPCRRCGTIIRRDKLSGRSTHWCPTCQG. The active-site Proton donor; for delta-elimination activity is the R268.

The protein belongs to the FPG family. As to quaternary structure, monomer. Zn(2+) serves as cofactor.

The catalysed reaction is Hydrolysis of DNA containing ring-opened 7-methylguanine residues, releasing 2,6-diamino-4-hydroxy-5-(N-methyl)formamidopyrimidine.. The enzyme catalyses 2'-deoxyribonucleotide-(2'-deoxyribose 5'-phosphate)-2'-deoxyribonucleotide-DNA = a 3'-end 2'-deoxyribonucleotide-(2,3-dehydro-2,3-deoxyribose 5'-phosphate)-DNA + a 5'-end 5'-phospho-2'-deoxyribonucleoside-DNA + H(+). Functionally, involved in base excision repair of DNA damaged by oxidation or by mutagenic agents. Acts as a DNA glycosylase that recognizes and removes damaged bases. Has a preference for oxidized purines, such as 7,8-dihydro-8-oxoguanine (8-oxoG). Has AP (apurinic/apyrimidinic) lyase activity and introduces nicks in the DNA strand. Cleaves the DNA backbone by beta-delta elimination to generate a single-strand break at the site of the removed base with both 3'- and 5'-phosphates. The protein is Formamidopyrimidine-DNA glycosylase of Parasynechococcus marenigrum (strain WH8102).